The sequence spans 1523 residues: Slit homolog 3 protein (1523 aa).

An N-terminal signal peptide occupies residues 1–33 (MALGRTGAGAAVRARLALGLALASILSGPPAAA). The LRRNT domain occupies 34–61 (CPTKCTCSAASVDCHGLGLRAVPRGIPR). 6 LRR repeats span residues 62–83 (NAER…DFAG), 86–107 (NLRV…AFQD), 110–131 (QLER…LFQS), 134–155 (KLTR…AFRG), 158–179 (GVKN…AFRA), and 182–203 (DLEI…SFNH). N-linked (GlcNAc...) asparagine glycosylation is present at Asn72. N-linked (GlcNAc...) asparagine glycosylation occurs at Asn192. In terms of domain architecture, LRRCT 1 spans 215-265 (NHLYCDCHLAWLSDWLRQRRTIGQFTLCMAPVHLRGFSVADVQKKEYVCPG). In terms of domain architecture, LRRNT 2 spans 271–307 (PACNANSLSCPSACSCSNNIVDCRGKGLTEIPANLPE). Cys284 and Cys293 are disulfide-bonded. LRR repeat units lie at residues 308–329 (GIVE…AFTQ), 332–353 (KLKR…AFQG), 356–377 (SLTS…LFDG), 380–401 (SLQL…TFQD), and 404–425 (NLNL…LFVP). One can recognise an LRRCT 2 domain in the interval 437–487 (NPFVCDCHLKWLADYLQDNPIETSGARCSSPRRLANKRISQIKSKKFRCSG). 4 disulfides stabilise this stretch: Cys441/Cys464, Cys443/Cys485, Cys505/Cys511, and Cys509/Cys518. Residues 496–532 (SSECFMDLVCPEKCRCEGTIVDCSNQKLARIPSHLPE) enclose the LRRNT 3 domain. LRR repeat units lie at residues 533 to 554 (YTTD…GIFK), 558 to 579 (NLRK…AFDG), 582 to 603 (GVQE…MFRG), 606 to 627 (SLKT…TFAG), and 630 to 651 (SVRL…AFTT). An N-linked (GlcNAc...) asparagine glycan is attached at Asn563. N-linked (GlcNAc...) asparagine glycosylation occurs at Asn622. The LRRCT 3 domain occupies 663–713 (NPFNCNCHMAWLGRWLRKRRIVSGNPRCQKPFFLKEIPIQDVAIQDFTCDG). Disulfide bonds link Cys667–Cys690 and Cys669–Cys711. An LRRNT 4 domain is found at 716–752 (ESSCQLSPRCPEQCTCVETVVRCSNRGLHALPKGMPK). 4 LRR repeats span residues 753 to 774 (DVTE…LSAF), 776 to 797 (QLTL…TFSN), 800 to 821 (HLST…AFNG), and 824 to 845 (SLRV…SFND). N-linked (GlcNAc...) asparagine glycans are attached at residues Asn784, Asn792, and Asn797. The region spanning 857–907 (NPLHCDCSLRWLSEWVKAGYKEPGIARCSSPESMADRLLLTTPTHRFQCKG) is the LRRCT 4 domain. EGF-like domains follow at residues 918 to 953 (NACL…KDCT), 955 to 994 (PINT…QRCE), 996 to 1032 (NPDD…ELCD), 1034 to 1072 (VIDY…KLCE), 1074 to 1110 (NNDD…LFCE), and 1119 to 1155 (QTSP…PRCE). 18 disulfides stabilise this stretch: Cys920–Cys931, Cys925–Cys941, Cys943–Cys952, Cys959–Cys970, Cys964–Cys982, Cys984–Cys993, Cys1000–Cys1011, Cys1005–Cys1020, Cys1022–Cys1031, Cys1038–Cys1051, Cys1045–Cys1060, Cys1062–Cys1071, Cys1078–Cys1089, Cys1083–Cys1098, Cys1100–Cys1109, Cys1123–Cys1134, Cys1128–Cys1143, and Cys1145–Cys1154. Asn928 carries N-linked (GlcNAc...) asparagine glycosylation. An N-linked (GlcNAc...) asparagine glycan is attached at Asn1025. Residues 1158–1332 (ITVNFVGKDS…PQSLGVSPGC (175 aa)) form the Laminin G-like domain. N-linked (GlcNAc...) asparagine glycans are attached at residues Asn1181 and Asn1247. 5 disulfides stabilise this stretch: Cys1305/Cys1332, Cys1355/Cys1364, Cys1372/Cys1382, Cys1377/Cys1391, and Cys1393/Cys1402. EGF-like domains lie at 1340 to 1365 (HGLC…PLCD) and 1368 to 1403 (ARDP…ALCD). The N-linked (GlcNAc...) asparagine glycan is linked to Asn1406. Positions 1408–1444 (SASACSAFKCHHGQCHISDRGEPYCLCQPGFSGHHCE) constitute an EGF-like 9 domain. 7 disulfides stabilise this stretch: Cys1412-Cys1422, Cys1417-Cys1432, Cys1434-Cys1443, Cys1449-Cys1487, Cys1467-Cys1501, Cys1478-Cys1517, and Cys1482-Cys1519. Residues 1449-1523 (CMGEIVREAI…HLECGCRACS (75 aa)) enclose the CTCK domain.

Its subcellular location is the secreted. Functionally, may act as molecular guidance cue in cellular migration, and function may be mediated by interaction with roundabout homolog receptors. The protein is Slit homolog 3 protein (Slit3) of Mus musculus (Mouse).